Here is an 89-residue protein sequence, read N- to C-terminus: MPRSTKKGPFFDHHLIKKVESAAGSKRPIKTCSRRSVILPQMVGHTIAIHNGKNYYPVVINENMVGHKLGEFSITRVFKGHGGDKKSGK.

It belongs to the universal ribosomal protein uS19 family.

Functionally, protein S19 forms a complex with S13 that binds strongly to the 16S ribosomal RNA. This is Small ribosomal subunit protein uS19 from Xylella fastidiosa (strain 9a5c).